Here is a 584-residue protein sequence, read N- to C-terminus: Chondroitin proteoglycan 1 (584 aa).

The N-terminal stretch at 1–17 (MTLKPVLLAFLVASAYA) is a signal peptide. Serine 50 carries O-linked (Xyl...) (chondroitin sulfate) serine glycosylation. Chitin-binding type-2 domains are found at residues 58 to 115 (DTDC…QCGG), 211 to 268 (TKSC…ECTN), and 524 to 578 (VPAC…ECHQ). 2 disulfides stabilise this stretch: cysteine 91/cysteine 104 and cysteine 244/cysteine 257. The segment at 267–295 (TNGSGNDEGSADETTPESSGEMPYSNGYG) is disordered. An N-linked (GlcNAc...) asparagine glycan is attached at asparagine 268. A disulfide bridge links cysteine 554 with cysteine 567.

In terms of tissue distribution, expressed in the germline.

Required for polar body extrusion during cytokinesis in embryo development. Affects cortical granule size. Has roles in meiotic chromosome segregation, osmotic barrier function and polarization in conjunction with cpg-2. Binds chitin. This is Chondroitin proteoglycan 1 (cpg-1) from Caenorhabditis elegans.